Consider the following 257-residue polypeptide: Imidazole glycerol phosphate synthase subunit HisF (257 aa).

Active-site residues include D12 and D131.

Belongs to the HisA/HisF family. In terms of assembly, heterodimer of HisH and HisF.

The protein localises to the cytoplasm. It carries out the reaction 5-[(5-phospho-1-deoxy-D-ribulos-1-ylimino)methylamino]-1-(5-phospho-beta-D-ribosyl)imidazole-4-carboxamide + L-glutamine = D-erythro-1-(imidazol-4-yl)glycerol 3-phosphate + 5-amino-1-(5-phospho-beta-D-ribosyl)imidazole-4-carboxamide + L-glutamate + H(+). Its pathway is amino-acid biosynthesis; L-histidine biosynthesis; L-histidine from 5-phospho-alpha-D-ribose 1-diphosphate: step 5/9. In terms of biological role, IGPS catalyzes the conversion of PRFAR and glutamine to IGP, AICAR and glutamate. The HisF subunit catalyzes the cyclization activity that produces IGP and AICAR from PRFAR using the ammonia provided by the HisH subunit. The sequence is that of Imidazole glycerol phosphate synthase subunit HisF from Paraburkholderia phymatum (strain DSM 17167 / CIP 108236 / LMG 21445 / STM815) (Burkholderia phymatum).